The following is a 550-amino-acid chain: Acetyl-coenzyme A transporter 1 (550 aa).

Composition is skewed to basic and acidic residues over residues 1 to 12 (MSPTISHKDSSR) and 36 to 52 (DDSRRDSVGGEGDREVL). The segment at 1–58 (MSPTISHKDSSRQRRSGMFSHALDMKSGPLPPGGWDDSRRDSVGGEGDREVLLGDAGP) is disordered. Topologically, residues 1–74 (MSPTISHKDS…PRSYRSELSS (74 aa)) are cytoplasmic. Ser42 bears the Phosphoserine mark. Residues 75–95 (ILLLLFLYVLQGIPLGLAGSI) traverse the membrane as a helical segment. Over 96 to 113 (PLILQSKNVSYTDQAFFS) the chain is Extracellular. Asn103 carries N-linked (GlcNAc...) asparagine glycosylation. The chain crosses the membrane as a helical span at residues 114–134 (FVFWPFSLKLLWAPLVDAVYF). Residues 135–141 (KNFGRRK) are Cytoplasmic-facing. The helical transmembrane segment at 142–162 (SWLVPTQYTLGIFMIYLSTQV) threads the bilayer. Residues 163–175 (DRLLGNIDGRTPD) lie on the Extracellular side of the membrane. The helical transmembrane segment at 176-196 (VVALTVTFFLFEFLAATQDIA) threads the bilayer. At 197 to 217 (VDGWALTMLSRENVGYASTCN) the chain is on the cytoplasmic side. A helical transmembrane segment spans residues 218 to 238 (SVGQTAGYFLGNVLFLALESA). Residues 239–256 (DFCNKYLRFQPQPRGIVT) lie on the Extracellular side of the membrane. Residues 257–277 (LSDFLFFWGTVFLITTTLVAL) form a helical membrane-spanning segment. At 278–300 (LKKENREASIVKEETQGITDTYK) the chain is on the cytoplasmic side. Residues 301–321 (LLFSIIKMPAVLAFCLLILTS) traverse the membrane as a helical segment. Topologically, residues 322 to 344 (KIGFSAADAVTGLKLVEEGVPKE) are extracellular. A helical membrane pass occupies residues 345–365 (HLALLAVPMVPLQIILPLLIS). Over 366–375 (KYTAGPQPLN) the chain is Cytoplasmic. Residues 376-396 (IFYKAMPYRLLLGLEYALLVW) form a helical membrane-spanning segment. At 397–405 (WTPKVEHQG) the chain is on the extracellular side. The helical transmembrane segment at 406 to 426 (GFPLYYYIIVLLSYALHQVTL) threads the bilayer. At 427-509 (YSMYVSIMAF…LGGSCVTALD (83 aa)) the chain is on the cytoplasmic side. Residues 510-530 (GYYVESIICVLIGFGWWFFLG) traverse the membrane as a helical segment. The Extracellular segment spans residues 531–550 (PKFKKLQDEGPSSWKCKRNN).

This sequence belongs to the SLC33A transporter family. Homodimerizes. In terms of tissue distribution, expressed in all adult tissues examined including brain, heart, kidney, liver and spleen, with maximum expression in liver and kidney.

The protein localises to the endoplasmic reticulum membrane. The enzyme catalyses acetyl-CoA(in) = acetyl-CoA(out). Its function is as follows. Acetyl-CoA transporter that mediates active acetyl-CoA import through the endoplasmic reticulum (ER) membrane into the ER lumen where specific ER-based acetyl-CoA:lysine acetyltransferases are responsible for the acetylation of ER-based protein substrate, such as BACE1. Necessary for O-acetylation of gangliosides. The polypeptide is Acetyl-coenzyme A transporter 1 (Slc33a1) (Mus musculus (Mouse)).